A 792-amino-acid chain; its full sequence is Receptor-like protein 54 (792 aa).

The signal sequence occupies residues 1–21 (MKSNLAVFFITCFFCCVFVTS). Residues 22–758 (DSVYTLPFPF…PKQEHALNWK (737 aa)) are Extracellular-facing. N-linked (GlcNAc...) asparagine glycosylation is found at Asn-68 and Asn-107. LRR repeat units lie at residues 114-137 (QHLRYLDLSENHFDSSPIPSGFGR), 139-162 (TYLESLDLSKNGFIGEVPSSISNL), 163-187 (SRLTNLDLSYNKLTGGIPNLHSLTL), 189-209 (ENIDLSYNKFSGAIPSYLFTM), 211-233 (FLVSLNLRQNHLSDPLENINYSA), 235-258 (SKLLILDMAYNLMSHRILEPISKL), 259-282 (ANLIQIDLSFQKTPYTFNFDFLLF), 283-302 (KSLVRLDLSGNSVSVVGTGS), 303-324 (ENLTHLDLSSCNITEFPMFIKD), 325-349 (LQRLWWLDISNNRIKGKVPELLWTL), 351-374 (SMLHVNLSRNSFDSLEGTPKIILN), and 375-399 (SSISELDLSSNAFKGSFPIIPPYVN). An N-linked (GlcNAc...) asparagine glycan is attached at Asn-161. Asn-230 carries an N-linked (GlcNAc...) asparagine glycan. Residues Asn-304 and Asn-314 are each glycosylated (N-linked (GlcNAc...) asparagine). N-linked (GlcNAc...) asparagine glycans are attached at residues Asn-356 and Asn-374. The LRR 13; degenerate repeat unit spans residues 400-418 (IMAASNNYFTGGIPLIFCK). LRR repeat units lie at residues 419–443 (RYRLSLLDLSNNNFSGTIPRCLTNV), 444–470 (SLGLEALKLSNNSLTGRLPDIEDRLVL), 472–489 (DVGHNQISGKLPRSLVNC), and 490–515 (TTLKFLNVEGNHINDTFPFWLKALTR). 5 N-linked (GlcNAc...) asparagine glycosylation sites follow: Asn-431, Asn-442, Asn-454, Asn-488, and Asn-503. An LRR 18; degenerate repeat occupies 516–536 (LEIIVLRSNRFHGPISSPEVS). LRR repeat units lie at residues 539–563 (FTALRIIDISRNSFNGSLPQNYFAN), 614–637 (DTYTSIDFSGNSFEGQIPESIGDL), 638–661 (KSLIVLDLSNNSFTGRIPSSLAKL), 662–685 (KQLESLDLSQNRISGNIPQELREL), and 687–709 (FLGYVNMSHNRLTGQIPQSTQVG). Residues Asn-553 and Asn-563 are each glycosylated (N-linked (GlcNAc...) asparagine). N-linked (GlcNAc...) asparagine glycosylation is present at Asn-647. The N-linked (GlcNAc...) asparagine glycan is linked to Asn-692. The chain crosses the membrane as a helical span at residues 759 to 779 (AAAIGYGPGVLFGLAIGQAFA). The Cytoplasmic segment spans residues 780–792 (RYKPVLFYKLFRL).

The protein belongs to the RLP family.

The protein resides in the cell membrane. This is Receptor-like protein 54 from Arabidopsis thaliana (Mouse-ear cress).